Reading from the N-terminus, the 341-residue chain is Uroporphyrinogen decarboxylase (341 aa).

Substrate is bound by residues 26–30 (RQAGR), Asp-75, Tyr-150, Ser-205, and His-318.

It belongs to the uroporphyrinogen decarboxylase family. In terms of assembly, homodimer.

It localises to the cytoplasm. It carries out the reaction uroporphyrinogen III + 4 H(+) = coproporphyrinogen III + 4 CO2. It functions in the pathway porphyrin-containing compound metabolism; protoporphyrin-IX biosynthesis; coproporphyrinogen-III from 5-aminolevulinate: step 4/4. Functionally, catalyzes the decarboxylation of four acetate groups of uroporphyrinogen-III to yield coproporphyrinogen-III. The protein is Uroporphyrinogen decarboxylase of Thermus thermophilus (strain ATCC 27634 / DSM 579 / HB8).